A 573-amino-acid chain; its full sequence is 60 kDa heat shock protein, mitochondrial (573 aa).

Residues methionine 1–tyrosine 26 constitute a mitochondrion transit peptide. At lysine 31 the chain carries N6-succinyllysine. 2 positions are modified to phosphoserine: serine 67 and serine 70. ATP is bound at residue lysine 75. Lysine 75 is modified (N6-acetyllysine). N6-acetyllysine; alternate is present on lysine 82. Lysine 82 is subject to N6-succinyllysine; alternate. Lysine 87 bears the N6-acetyllysine mark. Position 90 is a phosphotyrosine (tyrosine 90). Position 91 is an N6-acetyllysine (lysine 91). Aspartate 111–threonine 115 contacts ATP. Lysine 125 carries the N6-acetyllysine; alternate modification. Lysine 125 carries the N6-succinyllysine; alternate modification. Lysine 130 carries the N6-acetyllysine modification. At lysine 133 the chain carries N6-acetyllysine; alternate. At lysine 133 the chain carries N6-succinyllysine; alternate. The residue at position 133 (lysine 133) is an N6-malonyllysine; alternate. N6-acetyllysine is present on lysine 156. N6-acetyllysine; alternate is present on residues lysine 191, lysine 202, lysine 205, lysine 218, and lysine 236. An N6-succinyllysine; alternate mark is found at lysine 191, lysine 202, lysine 205, lysine 218, and lysine 236. At lysine 249 the chain carries N6-acetyllysine. At lysine 250 the chain carries N6-acetyllysine; alternate. Lysine 250 bears the N6-succinyllysine; alternate mark. Lysine 269 and lysine 292 each carry N6-acetyllysine. At lysine 301 the chain carries N6-succinyllysine. Lysine 314 is subject to N6-acetyllysine. Lysine 352 is subject to N6-acetyllysine; alternate. Residue lysine 352 is modified to N6-succinyllysine; alternate. Residues lysine 359 and lysine 389 each carry the N6-acetyllysine modification. Lysine 396 carries the N6-acetyllysine; alternate modification. Lysine 396 bears the N6-succinyllysine; alternate mark. Position 410 is a phosphoserine (serine 410). Glycine 440 provides a ligand contact to ATP. Lysine 455 carries the post-translational modification N6-acetyllysine; alternate. An N6-succinyllysine; alternate modification is found at lysine 455. Lysine 469 is subject to N6-acetyllysine. Position 481 is an N6-acetyllysine; alternate (lysine 481). N6-succinyllysine; alternate is present on lysine 481. Serine 488 is modified (phosphoserine). Aspartate 520 contacts ATP. Lysine 551 participates in a covalent cross-link: Glycyl lysine isopeptide (Lys-Gly) (interchain with G-Cter in SUMO2).

This sequence belongs to the chaperonin (HSP60) family. Homoheptamer arranged in a ring structure. The functional units of these chaperonins consist of heptameric rings of the large subunit Hsp60, which function as a back-to-back double ring. Interacts with 2 heptameric Hsp10 rings to form the symmetrical football complex. Interacts with HRAS. Interacts with ATAD3A. Interacts with ETFBKMT and EEF1AKMT3. Interacts with MFHAS1.

Its subcellular location is the mitochondrion matrix. It carries out the reaction ATP + H2O + a folded polypeptide = ADP + phosphate + an unfolded polypeptide.. Functionally, chaperonin implicated in mitochondrial protein import and macromolecular assembly. Together with Hsp10, facilitates the correct folding of imported proteins. May also prevent misfolding and promote the refolding and proper assembly of unfolded polypeptides generated under stress conditions in the mitochondrial matrix. The functional units of these chaperonins consist of heptameric rings of the large subunit Hsp60, which function as a back-to-back double ring. In a cyclic reaction, Hsp60 ring complexes bind one unfolded substrate protein per ring, followed by the binding of ATP and association with 2 heptameric rings of the co-chaperonin Hsp10. This leads to sequestration of the substrate protein in the inner cavity of Hsp60 where, for a certain period of time, it can fold undisturbed by other cell components. Synchronous hydrolysis of ATP in all Hsp60 subunits results in the dissociation of the chaperonin rings and the release of ADP and the folded substrate protein. The polypeptide is 60 kDa heat shock protein, mitochondrial (Hspd1) (Rattus norvegicus (Rat)).